The sequence spans 152 residues: uncharacterized protein (152 aa).

This is an uncharacterized protein from Acheta domesticus (House cricket).